Reading from the N-terminus, the 243-residue chain is rRNA adenine N-6-methyltransferase (243 aa).

6 residues coordinate S-adenosyl-L-methionine: N11, I13, G38, E59, D84, and N101.

The protein belongs to the class I-like SAM-binding methyltransferase superfamily. rRNA adenine N(6)-methyltransferase family.

It catalyses the reaction adenosine(2085) in 23S rRNA + 2 S-adenosyl-L-methionine = N(6)-dimethyladenosine(2085) in 23S rRNA + 2 S-adenosyl-L-homocysteine + 2 H(+). Functionally, this protein produces a dimethylation of the adenine residue at position 2085 in 23S rRNA, resulting in reduced affinity between ribosomes and macrolide-lincosamide-streptogramin B antibiotics. The polypeptide is rRNA adenine N-6-methyltransferase (ermA1) (Staphylococcus aureus (strain Mu50 / ATCC 700699)).